Reading from the N-terminus, the 246-residue chain is 3-deoxy-manno-octulosonate cytidylyltransferase (246 aa).

The protein belongs to the KdsB family.

It is found in the cytoplasm. It carries out the reaction 3-deoxy-alpha-D-manno-oct-2-ulosonate + CTP = CMP-3-deoxy-beta-D-manno-octulosonate + diphosphate. It participates in nucleotide-sugar biosynthesis; CMP-3-deoxy-D-manno-octulosonate biosynthesis; CMP-3-deoxy-D-manno-octulosonate from 3-deoxy-D-manno-octulosonate and CTP: step 1/1. Its pathway is bacterial outer membrane biogenesis; lipopolysaccharide biosynthesis. Functionally, activates KDO (a required 8-carbon sugar) for incorporation into bacterial lipopolysaccharide in Gram-negative bacteria. The protein is 3-deoxy-manno-octulosonate cytidylyltransferase of Bradyrhizobium sp. (strain BTAi1 / ATCC BAA-1182).